The primary structure comprises 228 residues: DNA mismatch repair protein MutH (228 aa).

The protein belongs to the MutH family.

It localises to the cytoplasm. Its function is as follows. Sequence-specific endonuclease that cleaves unmethylated GATC sequences. It is involved in DNA mismatch repair. This chain is DNA mismatch repair protein MutH, found in Yersinia pseudotuberculosis serotype IB (strain PB1/+).